We begin with the raw amino-acid sequence, 133 residues long: Putative HTH-type transcriptional regulator YwnA (133 aa).

The 130-residue stretch at 1-130 folds into the HTH rrf2-type domain; sequence MINSRLAVAI…ASKSLKDVMN (130 aa). Positions 24–47 form a DNA-binding region, H-T-H motif; that stretch reads SEIIADSVNTNPVVVRRMISLLKK.

The protein is Putative HTH-type transcriptional regulator YwnA (ywnA) of Bacillus subtilis (strain 168).